Reading from the N-terminus, the 322-residue chain is Ferredoxin--NADP reductase (322 aa).

7 residues coordinate FAD: Asp-34, Gln-42, Tyr-47, Val-87, Phe-120, Asp-279, and Thr-320.

It belongs to the ferredoxin--NADP reductase type 2 family. As to quaternary structure, homodimer. It depends on FAD as a cofactor.

It carries out the reaction 2 reduced [2Fe-2S]-[ferredoxin] + NADP(+) + H(+) = 2 oxidized [2Fe-2S]-[ferredoxin] + NADPH. This Streptococcus gordonii (strain Challis / ATCC 35105 / BCRC 15272 / CH1 / DL1 / V288) protein is Ferredoxin--NADP reductase.